A 139-amino-acid chain; its full sequence is MIKGINHITYSVSNIAKSIEFYRDILGADILVEGETSAYFNLGGIWLALNEEKNIPRSEIKYSYTHIAFTISDNDFEDWYIWLKENEVNILEGRDRDIRDKKSIYFTDLDGHKLELHTGSLEDRLSYYKEAKPHMNFYI.

The VOC domain maps to 4–119 (GINHITYSVS…DGHKLELHTG (116 aa)). Mg(2+) contacts are provided by histidine 7, histidine 66, and glutamate 115. Catalysis depends on glutamate 115, which acts as the Proton donor/acceptor.

Belongs to the fosfomycin resistance protein family. FosB subfamily. Homodimer. It depends on Mg(2+) as a cofactor.

Its subcellular location is the cytoplasm. In terms of biological role, metallothiol transferase which confers resistance to fosfomycin by catalyzing the addition of a thiol cofactor to fosfomycin. L-cysteine is probably the physiological thiol donor. This is Metallothiol transferase FosB from Staphylococcus epidermidis.